A 534-amino-acid polypeptide reads, in one-letter code: Protein BFR2 (534 aa).

Residues 27-148 (ENASLFQHNE…ETEEAQQKRH (122 aa)) form a disordered region. Phosphoserine is present on residues S41 and S44. The span at 52–77 (EETKKAHYLEVEKSKLRAEKGLELND) shows a compositional bias: basic and acidic residues. The stretch at 86–161 (SRQALYEEVS…KLIQQETKQA (76 aa)) forms a coiled coil. Acidic residues-rich tracts occupy residues 93–114 (EVSE…EEDA) and 121–142 (SEDE…ETEE). S366, S372, and S379 each carry phosphoserine.

This sequence belongs to the AATF family.

It localises to the nucleus. The protein resides in the nucleolus. Involved in endoplasmic reticulum to Golgi transport. Involved in a protein-transport step blocked by brefeldin A, which disrupts the Golgi apparatus and its incoming protein flux. May also be involved for mass growth or cell proliferation. The polypeptide is Protein BFR2 (BFR2) (Saccharomyces cerevisiae (strain ATCC 204508 / S288c) (Baker's yeast)).